Here is a 1021-residue protein sequence, read N- to C-terminus: Chondroitin sulfate ABC endolyase (1021 aa).

Positions 1–24 (MPIFRFTALAMTLGLLSAPYNAMA) are cleaved as a signal peptide. Histidine 43, methionine 70, glutamine 73, and aspartate 211 together coordinate Na(+). Residue histidine 501 is the Proton acceptor of the active site. The active-site Proton donor is tyrosine 508.

Belongs to the polysaccharide lyase 8 family. In terms of assembly, monomer.

It is found in the periplasm. The catalysed reaction is Endolytic cleavage of (1-&gt;4)-beta-galactosaminic bonds between N-acetylgalactosamine and either D-glucuronic acid or L-iduronic acid to produce a mixture of Delta(4)-unsaturated oligosaccharides of different sizes that are ultimately degraded to Delta(4)-unsaturated tetra- and disaccharides.. Its activity is regulated as follows. Is inhibited by Zn(2+), Ni(2+), Fe(2+) and Cu(2+). Endolytic, broad-specificity glycosaminoglycan lyase, which degrades the polysaccharides chondroitin, chondroitin-4-sulfate, chondroitin-6-sulfate, dermatan sulfate and to a lesser extent hyaluronan, by beta-elimination of 1,4-hexosaminidic bond to unsaturated tetrasaccharides and disaccharides. Is not active against keratan sulfate, heparan sulfate, and heparin. Is able to promote functional recovery in the injured central nervous system (CNS), via its role in the disruption of the normal organization of the extracellular matrix (ECM). The protein is Chondroitin sulfate ABC endolyase of Proteus vulgaris.